The primary structure comprises 255 residues: tRNA (guanine-N(7)-)-methyltransferase (255 aa).

A disordered region spans residues 1-31 (MMHDDPNEAGLPPHNDAIPDETAEGADEVNP). Residues 18–27 (IPDETAEGAD) show a composition bias toward acidic residues. Residues E86, E111, D138, and D161 each contribute to the S-adenosyl-L-methionine site. D161 is an active-site residue. Residues K165, D197, and 232 to 235 (TKFE) contribute to the substrate site.

Belongs to the class I-like SAM-binding methyltransferase superfamily. TrmB family.

The enzyme catalyses guanosine(46) in tRNA + S-adenosyl-L-methionine = N(7)-methylguanosine(46) in tRNA + S-adenosyl-L-homocysteine. The protein operates within tRNA modification; N(7)-methylguanine-tRNA biosynthesis. Catalyzes the formation of N(7)-methylguanine at position 46 (m7G46) in tRNA. This chain is tRNA (guanine-N(7)-)-methyltransferase, found in Burkholderia cenocepacia (strain HI2424).